Reading from the N-terminus, the 259-residue chain is Peroxisomal membrane protein 11B (259 aa).

Lys-43 carries the N6-acetyllysine modification. The disordered stretch occupies residues 157–176; it reads LKGSGGGVPGGSETGGLGGP. Residues 159 to 176 are compositionally biased toward gly residues; that stretch reads GSGGGVPGGSETGGLGGP. The tract at residues 211-259 is interaction with PEX19, PEX11G and FIS1 and peroxisome targeting; sequence VVRNACDLFIPLDKLGLWRCGPGIVGLCGLVSSILSILTLIYPWLRLKP. Residues 233–255 form a helical membrane-spanning segment; it reads GIVGLCGLVSSILSILTLIYPWL.

Belongs to the peroxin-11 family. Homodimer. Heterodimer with PEX11G. Interacts with PEX19. Interacts with FIS1.

It localises to the peroxisome membrane. Functionally, involved in peroxisomal proliferation. May regulate peroxisome division by recruiting the dynamin-related GTPase DNM1L to the peroxisomal membrane. Promotes membrane protrusion and elongation on the peroxisomal surface. This chain is Peroxisomal membrane protein 11B (PEX11B), found in Homo sapiens (Human).